Consider the following 518-residue polypeptide: MKSFSRILFLVFLLAGLRSKAAPSAPLPLGCGFPDMAHPSETSPLKGASENSKRDRLNPEFPGTPYPEPSKLPHTVSLETFPLDFTEPLNPDLRETPHPESPETPKADSLTTSISESLDMPKTNLSKMAHPESSETPTPGPTEMPHPGSPETPKPNFSKTSRPEFPETPNTDLMQTTPQESPEILQLNATEVSQAELPETSNTNPTKTPDPKSPEKHDLNSTETPNSEFLQALHPDPSKTPHPESHVTHNPSPTEISQTEFPTTYYQNATDVPRTSDPQISTSLYPETPVPFKDDATALNELSLNPKPGTPAAIQPDSPKLPTSDSPGMVELKAPQNSGPKESNVPPPSARIAGPPALPGRPSQLAPATLRAPQRHSRGEGVNTIIVVERVKETGVTLVGRPRGAAGGALCLFFAGTALLIGIFVLLWCLYRRAARQRPFAHHRLPDDGDEPVLHLDAPKDPYDLYFYAPDTWVPSHIATKQPPPTPPLPPKLPPPPRGGRPQRLEALSPATLPNNFV.

The signal sequence occupies residues 1 to 19 (MKSFSRILFLVFLLAGLRS). The Extracellular portion of the chain corresponds to 20 to 409 (KAAPSAPLPL…GRPRGAAGGA (390 aa)). A disordered region spans residues 38–377 (HPSETSPLKG…ATLRAPQRHS (340 aa)). Residues 92-106 (DLRETPHPESPETPK) are compositionally biased toward basic and acidic residues. Residue asparagine 124 is glycosylated (N-linked (GlcNAc...) asparagine). A compositionally biased stretch (pro residues) spans 138–153 (TPGPTEMPHPGSPETP). Asparagine 156 is a glycosylation site (N-linked (GlcNAc...) asparagine). Composition is skewed to polar residues over residues 168-180 (TPNT…TPQE) and 187-207 (LNAT…NPTK). N-linked (GlcNAc...) asparagine glycans are attached at residues asparagine 188 and asparagine 220. 2 stretches are compositionally biased toward basic and acidic residues: residues 209 to 220 (PDPKSPEKHDLN) and 236 to 247 (DPSKTPHPESHV). 2 stretches are compositionally biased toward polar residues: residues 248–270 (THNP…QNAT) and 276–285 (SDPQISTSLY). Residue asparagine 268 is glycosylated (N-linked (GlcNAc...) asparagine). Residues 410-430 (LCLFFAGTALLIGIFVLLWCL) form a helical membrane-spanning segment. Residues 431–518 (YRRAARQRPF…SPATLPNNFV (88 aa)) lie on the Cytoplasmic side of the membrane. The segment at 477–518 (HIATKQPPPTPPLPPKLPPPPRGGRPQRLEALSPATLPNNFV) is disordered. Positions 482–499 (QPPPTPPLPPKLPPPPRG) are enriched in pro residues.

The protein localises to the golgi apparatus membrane. Its function is as follows. Required for proper function of the olfactory system. May be involved in establishing the acuity of olfactory sensory signaling. In Homo sapiens (Human), this protein is Golgi-associated olfactory signaling regulator (GFY).